A 752-amino-acid chain; its full sequence is Probable GTP-binding protein OBGC1, chloroplastic (752 aa).

The N-terminal 90 residues, 1 to 90 (MAPAVAVVAA…RFPTANPEPR (90 aa)), are a transit peptide targeting the chloroplast. The interval 19-121 (FSAEARRNTK…EEDEVELGLR (103 aa)) is disordered. Residues 26–36 (NTKGSRSKRGS) are compositionally biased toward basic residues. Acidic residues predominate over residues 103 to 117 (GDDEEDEEEEEDEVE). Residues 294 to 452 (MRCFDTAKIY…MWIDLELKLV (159 aa)) form the Obg domain. Positions 453-621 (ADVGIVGAPN…VVLAAYKVLQ (169 aa)) constitute an OBG-type G domain. GTP is bound by residues 459-466 (GAPNAGKS), 484-488 (FTTLL), 506-509 (DLPG), 573-576 (NKMD), and 602-604 (SAM). Positions 466 and 486 each coordinate Mg(2+). The 80-residue stretch at 649–728 (ERRAPMNEFE…VGEMEMVWTD (80 aa)) folds into the OCT domain. Residues 728–752 (DEPSKTRSSKTMNSKDDSVRWPEFG) form a disordered region. A compositionally biased stretch (basic and acidic residues) spans 740–752 (NSKDDSVRWPEFG).

The protein belongs to the TRAFAC class OBG-HflX-like GTPase superfamily. OBG GTPase family. Requires Mg(2+) as cofactor.

It localises to the plastid. Its subcellular location is the chloroplast. Its function is as follows. Probable GTP-binding protein that may play a role in chloroplast development. This chain is Probable GTP-binding protein OBGC1, chloroplastic (OBGC1), found in Oryza sativa subsp. indica (Rice).